Consider the following 354-residue polypeptide: UDP-2,3-diacetamido-2,3-dideoxy-D-glucuronate 2-epimerase (354 aa).

Belongs to the UDP-N-acetylglucosamine 2-epimerase family.

The catalysed reaction is UDP-2,3-diacetamido-2,3-dideoxy-alpha-D-glucuronate = UDP-2,3-diacetamido-2,3-dideoxy-alpha-D-mannuronate. Its pathway is bacterial outer membrane biogenesis; LPS O-antigen biosynthesis. Functionally, plays a role in the biosynthesis of B-band O antigen for serotype O5. Catalyzes the epimerization of UDP-2,3-diacetamido-2,3-dideoxy-alpha-D-glucuronic acid (UDP-alpha-D-GlcNAc3NAcA) to UDP-2,3-diacetamido-2,3-dideoxy-alpha-D-mannuronic acid (UDP-alpha-D-ManNAc3NAcA). Exhibits high specificity towards the substrate as UDP-alpha-D-GlcNAc, UDP-alpha-D-GlcNAcA (UDP-2-acetamido-2-deoxy-alpha-D-glucuronic acid) and UDP-alpha-D-GlcNAc3NAc (UDP-2,3-diacetamido-2,3-dideoxy-alpha-D-glucose) cannot act as substrates. The protein is UDP-2,3-diacetamido-2,3-dideoxy-D-glucuronate 2-epimerase of Pseudomonas aeruginosa (strain ATCC 15692 / DSM 22644 / CIP 104116 / JCM 14847 / LMG 12228 / 1C / PRS 101 / PAO1).